The primary structure comprises 110 residues: U1-lycotoxin-Ls1hh (110 aa).

The N-terminal stretch at 1–20 (MKFVLLFGVLLVTLFSYSSA) is a signal peptide. The propeptide occupies 21-44 (EMLDDFDQADEDELLSLIEKEEAR). Cystine bridges form between C47–C62, C54–C71, C61–C89, and C73–C87.

The protein belongs to the neurotoxin 19 (CSTX) family. 03 subfamily. Expressed by the venom gland.

It localises to the secreted. The sequence is that of U1-lycotoxin-Ls1hh from Lycosa singoriensis (Wolf spider).